A 243-amino-acid chain; its full sequence is Probable glycerol uptake facilitator protein (243 aa).

2 helical membrane passes run 7-27 (ILLGELIGTMVLIILGNGVCA) and 44-64 (LLIALGWGFAVFCGVVISIQV). The NPA 1 signature appears at 72–74 (NPA). The next 3 helical transmembrane spans lie at 88-108 (IGLLFAMIAMQLLGAMIAQII), 143-163 (ISYEMLGTMILLAGVMAGDYH), and 166-186 (TGVFFVMAIVMSLGSVTGCAI). The NPA 2 motif lies at 187-189 (NPA). The chain crosses the membrane as a helical span at residues 221 to 241 (LVPLLAPIAAGLIMGGFSLLI).

This sequence belongs to the MIP/aquaporin (TC 1.A.8) family.

Its subcellular location is the cell membrane. The catalysed reaction is glycerol(in) = glycerol(out). Its function is as follows. Mediates glycerol diffusion across the cytoplasmic membrane via a pore-type mechanism. This Mycoplasmoides gallisepticum (strain R(low / passage 15 / clone 2)) (Mycoplasma gallisepticum) protein is Probable glycerol uptake facilitator protein (glpF).